A 460-amino-acid polypeptide reads, in one-letter code: Phosphoenolpyruvate carboxylase (460 aa).

It belongs to the PEPCase type 2 family. As to quaternary structure, homotetramer. Mg(2+) is required as a cofactor.

It carries out the reaction oxaloacetate + phosphate = phosphoenolpyruvate + hydrogencarbonate. Its function is as follows. Catalyzes the irreversible beta-carboxylation of phosphoenolpyruvate (PEP) to form oxaloacetate (OAA), a four-carbon dicarboxylic acid source for the tricarboxylic acid cycle. The chain is Phosphoenolpyruvate carboxylase from Pyrobaculum arsenaticum (strain DSM 13514 / JCM 11321 / PZ6).